The sequence spans 530 residues: T-box transcription factor TBX21 (530 aa).

The disordered stretch occupies residues 1-55 (MGIVEPGCGDMLTGTEPMPSDEGRGPGADQQHRFFYPEPGAQDPTDRRAGSSLGT). Serine 52 is subject to Phosphoserine. Position 55 is a phosphothreonine (threonine 55). 2 positions are modified to phosphotyrosine: tyrosine 76 and tyrosine 117. A DNA-binding region (T-box) is located at residues 140 to 325 (LSNHLLWSKF…NNPFAKGFRE (186 aa)). At tyrosine 219 the chain carries Phosphotyrosine; by ABL1. At serine 224 the chain carries Phosphoserine. At tyrosine 265 the chain carries Phosphotyrosine; by ABL1. The residue at position 302 (threonine 302) is a Phosphothreonine. A Phosphotyrosine; by ABL1 modification is found at tyrosine 304. Lysine 313 participates in a covalent cross-link: Glycyl lysine isopeptide (Lys-Gly) (interchain with G-Cter in ubiquitin). The interval 444-530 (AGWFRPMRTL…EGQFYNYFPN (87 aa)) is disordered. The span at 462–482 (SEEQGSSPSLWPEVTSLQPEP) shows a compositional bias: polar residues. Low complexity predominate over residues 498–515 (SPYPSSGDSSSPAGAPSP). Serine 508 is modified (phosphoserine). A Phosphotyrosine; by ITK modification is found at tyrosine 525.

In terms of assembly, interacts with RUNX1 and RUNX3. Interacts with ITK. The phosphorylated form (at Tyr-525) interacts with GATA3. Interacts with ABL1. Interacts with RELA. The phosphorylated form (at Thr-302) interacts with NFATC2. Interacts with KDM6B. Interacts with SMARCA4 in a KDM6B-dependent manner. Interacts with CCTN1 and CDK9. Interacts with USP10. Phosphorylations at Ser-52, Tyr-76, Ser-224 and Ser-508 are regulated by mTORC1. Phosphorylation at Tyr-525 is essential for its interaction GATA3. Phosphorylation at Tyr-219, Tyr-265 and Tyr-304 enhances its transcriptional activator activity. Phosphorylation at Thr-302 is required for its interaction with NFATC2. Post-translationally, ubiquitinated at Lys-313, leading to its degradation by the proteasome. Ubiquitination is essential for controlling protein stability, binding to the T-box-binding element of the IFN-gamma promoter, and for interaction with NFATC2 through induction of phosphorylation at Thr-302. Deubiquitinated by USP10 leading to its stabilization. T-cell specific. Expressed in regulatory T (TReg) cells.

It is found in the nucleus. In terms of biological role, lineage-defining transcription factor which initiates Th1 lineage development from naive Th precursor cells both by activating Th1 genetic programs and by repressing the opposing Th2 and Th17 genetic programs. Activates transcription of a set of genes important for Th1 cell function, including those encoding IFN-gamma and the chemokine receptor CXCR3. Activates IFNG and CXCR3 genes in part by recruiting chromatin remodeling complexes including KDM6B, a SMARCA4-containing SWI/SNF-complex, and an H3K4me2-methyltransferase complex to their promoters and all of these complexes serve to establish a more permissive chromatin state conducive with transcriptional activation. Can activate Th1 genes also via recruitment of Mediator complex and P-TEFb (composed of CDK9 and CCNT1/cyclin-T1) in the form of the super elongation complex (SEC) to super-enhancers and associated genes in activated Th1 cells. Inhibits the Th17 cell lineage commitment by blocking RUNX1-mediated transactivation of Th17 cell-specific transcriptinal regulator RORC. Inhibits the Th2 cell lineage commitment by suppressing the production of Th2 cytokines, such as IL-4, IL-5, and IL- 13, via repression of transcriptional regulators GATA3 and NFATC2. Protects Th1 cells from amplifying aberrant type-I IFN response in an IFN-gamma abundant microenvironment by acting as a repressor of type-I IFN transcription factors and type-I IFN- stimulated genes. Acts as a regulator of antiviral B-cell responses; controls chronic viral infection by promoting the antiviral antibody IgG2a isotype switching and via regulation of a broad antiviral gene expression program. The polypeptide is T-box transcription factor TBX21 (Tbx21) (Mus musculus (Mouse)).